Reading from the N-terminus, the 725-residue chain is Homeobox protein unc-62 (725 aa).

The region spanning 133–218 is the MEIS N-terminal domain; it reads SSDVCSSASF…PLDIVGDERA (86 aa). 6 disordered regions span residues 214 to 258, 295 to 317, 329 to 359, 386 to 419, 491 to 555, and 615 to 661; these read GDER…PYEP, SSSS…LHST, VSSP…GNSM, SLHQ…PPPQ, VKME…KRKV, and IDQN…PDPT. Positions 219-239 are enriched in low complexity; the sequence is SSSQPPMSPGSMGHHGHSGSP. Residues 388-400 show a composition bias toward basic residues; sequence HQHHLHHPHHFPH. The span at 498 to 508 shows a compositional bias: low complexity; it reads SVSSSKSGGKK. The segment covering 541–550 has biased composition (polar residues); the sequence is LSDSANGSQN. Residues 552-614 constitute a DNA-binding region (homeobox; TALE-type); it reads KRKVPKVFSK…NARRRIVQPM (63 aa).

The protein belongs to the TALE/MEIS homeobox family.

Its subcellular location is the nucleus. Acts redundantly with ceh-20 and ceh-40 to perform overlapping roles during embryogenesis. Required for postembryonic development of the ectoderm, including the Q, V and P cell lineages, playing a crucial role in ensuring that these cells and their descendants undergo their invariant patterns of cell division, migration, fusion and morphogenesis. Has a role in the mig-13 pathway to promote anterior migration of neuroblasts in the Q lineage. Required for multiple roles in regulating vulva development. This is Homeobox protein unc-62 (unc-62) from Caenorhabditis briggsae.